The sequence spans 379 residues: Alanine racemase (379 aa).

Catalysis depends on lysine 35, which acts as the Proton acceptor; specific for D-alanine. Lysine 35 bears the N6-(pyridoxal phosphate)lysine mark. A substrate-binding site is contributed by arginine 133. The Proton acceptor; specific for L-alanine role is filled by tyrosine 265. Methionine 312 lines the substrate pocket.

The protein belongs to the alanine racemase family. Requires pyridoxal 5'-phosphate as cofactor.

It carries out the reaction L-alanine = D-alanine. It functions in the pathway amino-acid biosynthesis; D-alanine biosynthesis; D-alanine from L-alanine: step 1/1. Functionally, catalyzes the interconversion of L-alanine and D-alanine. May also act on other amino acids. This chain is Alanine racemase (alr), found in Treponema denticola (strain ATCC 35405 / DSM 14222 / CIP 103919 / JCM 8153 / KCTC 15104).